Consider the following 416-residue polypeptide: Signal recognition particle receptor FtsY (416 aa).

The segment covering 1-10 (MFSFFRRKKK) has biased composition (basic residues). The segment at 1–24 (MFSFFRRKKKQETPALEEAQVQET) is disordered. GTP is bound by residues 224-231 (GINGAGKT), 304-308 (DTAGR), and 368-371 (TKLD).

The protein belongs to the GTP-binding SRP family. FtsY subfamily. As to quaternary structure, part of the signal recognition particle protein translocation system, which is composed of SRP and FtsY. SRP is a ribonucleoprotein composed of Ffh and a 4.5S RNA molecule. Mg(2+) is required as a cofactor.

It localises to the cell membrane. It is found in the cytoplasm. It carries out the reaction GTP + H2O = GDP + phosphate + H(+). In terms of biological role, involved in targeting and insertion of nascent membrane proteins into the cytoplasmic membrane. Acts as a receptor for the complex formed by the signal recognition particle (SRP) and the ribosome-nascent chain (RNC). Interaction with SRP-RNC leads to the transfer of the RNC complex to the Sec translocase for insertion into the membrane, the hydrolysis of GTP by both Ffh and FtsY, and the dissociation of the SRP-FtsY complex into the individual components. This is Signal recognition particle receptor FtsY from Neisseria gonorrhoeae.